Reading from the N-terminus, the 422-residue chain is Histidine--tRNA ligase (422 aa).

It belongs to the class-II aminoacyl-tRNA synthetase family. In terms of assembly, homodimer.

Its subcellular location is the cytoplasm. The catalysed reaction is tRNA(His) + L-histidine + ATP = L-histidyl-tRNA(His) + AMP + diphosphate + H(+). In Ruthia magnifica subsp. Calyptogena magnifica, this protein is Histidine--tRNA ligase.